The following is a 428-amino-acid chain: Serine hydroxymethyltransferase (428 aa).

Residue 120–122 (GHI) coordinates (6S)-5,6,7,8-tetrahydrofolate. Lys226 bears the N6-(pyridoxal phosphate)lysine mark.

The protein belongs to the SHMT family. In terms of assembly, homodimer. Pyridoxal 5'-phosphate is required as a cofactor.

It localises to the cytoplasm. The catalysed reaction is 5,10-methylenetetrahydromethanopterin + glycine + H2O = 5,6,7,8-tetrahydromethanopterin + L-serine. It participates in amino-acid biosynthesis; glycine biosynthesis; glycine from L-serine: step 1/1. Catalyzes the reversible interconversion of serine and glycine with tetrahydromethanopterin (H4MPT) serving as the one-carbon carrier. Also exhibits a pteridine-independent aldolase activity toward beta-hydroxyamino acids, producing glycine and aldehydes, via a retro-aldol mechanism. This is Serine hydroxymethyltransferase from Methanopyrus kandleri (strain AV19 / DSM 6324 / JCM 9639 / NBRC 100938).